The chain runs to 882 residues: ABC transporter H family member 4 (882 aa).

The next 3 membrane-spanning stretches (helical) occupy residues Trp4–Phe24, Leu35–Trp55, and Thr79–Leu101. An ABC transporter domain is found at Phe384–Gly863. Gly418–Ser425 is a binding site for ATP. Disordered stretches follow at residues Phe522–Ile617, Ser634–Val669, and Asn710–Ser730. 2 stretches are compositionally biased toward low complexity: residues Ile528–Ile617 and Asn647–Ser667. The span at Asp715–Ala724 shows a compositional bias: acidic residues.

Belongs to the ABC transporter superfamily. ABCH family.

The protein localises to the membrane. This chain is ABC transporter H family member 4 (abcH4), found in Dictyostelium discoideum (Social amoeba).